The following is a 276-amino-acid chain: Dermonecrotic toxin LlSicTox-alphaIV1i (276 aa).

His5 is a catalytic residue. Residues Glu25 and Asp27 each contribute to the Mg(2+) site. Residue His41 is the Nucleophile of the active site. 2 disulfides stabilise this stretch: Cys45–Cys51 and Cys47–Cys193. Position 85 (Asp85) interacts with Mg(2+).

The protein belongs to the arthropod phospholipase D family. Class II subfamily. It depends on Mg(2+) as a cofactor. Expressed by the venom gland.

It localises to the secreted. The catalysed reaction is an N-(acyl)-sphingosylphosphocholine = an N-(acyl)-sphingosyl-1,3-cyclic phosphate + choline. It carries out the reaction an N-(acyl)-sphingosylphosphoethanolamine = an N-(acyl)-sphingosyl-1,3-cyclic phosphate + ethanolamine. It catalyses the reaction a 1-acyl-sn-glycero-3-phosphocholine = a 1-acyl-sn-glycero-2,3-cyclic phosphate + choline. The enzyme catalyses a 1-acyl-sn-glycero-3-phosphoethanolamine = a 1-acyl-sn-glycero-2,3-cyclic phosphate + ethanolamine. Dermonecrotic toxins cleave the phosphodiester linkage between the phosphate and headgroup of certain phospholipids (sphingolipid and lysolipid substrates), forming an alcohol (often choline) and a cyclic phosphate. This toxin acts on sphingomyelin (SM). It may also act on ceramide phosphoethanolamine (CPE), lysophosphatidylcholine (LPC) and lysophosphatidylethanolamine (LPE), but not on lysophosphatidylserine (LPS), and lysophosphatidylglycerol (LPG). It acts by transphosphatidylation, releasing exclusively cyclic phosphate products as second products. Induces dermonecrosis, hemolysis, increased vascular permeability, edema, inflammatory response, and platelet aggregation. This is Dermonecrotic toxin LlSicTox-alphaIV1i from Loxosceles laeta (South American recluse spider).